The following is a 173-amino-acid chain: Ribosome maturation factor RimM (173 aa).

The PRC barrel domain occupies 94-166; the sequence is VQEEPYIDII…KIIVELPMGF (73 aa).

It belongs to the RimM family. In terms of assembly, binds ribosomal protein uS19.

It localises to the cytoplasm. In terms of biological role, an accessory protein needed during the final step in the assembly of 30S ribosomal subunit, possibly for assembly of the head region. Essential for efficient processing of 16S rRNA. May be needed both before and after RbfA during the maturation of 16S rRNA. It has affinity for free ribosomal 30S subunits but not for 70S ribosomes. This chain is Ribosome maturation factor RimM, found in Amoebophilus asiaticus (strain 5a2).